Consider the following 364-residue polypeptide: Putative zinc metalloprotease all3971 (364 aa).

Zn(2+) is bound at residue H17. E18 is a catalytic residue. Zn(2+) is bound at residue H21. The next 3 helical transmembrane spans lie at 92 to 114 (AIVI…LAQV), 281 to 303 (LFFF…LPAL), and 329 to 346 (VMQT…FLIV). A PDZ domain is found at 103-188 (LIFAYMLLLA…KSIQLTVARG (86 aa)).

The protein belongs to the peptidase M50B family. Requires Zn(2+) as cofactor.

Its subcellular location is the cell inner membrane. The protein is Putative zinc metalloprotease all3971 of Nostoc sp. (strain PCC 7120 / SAG 25.82 / UTEX 2576).